Here is a 255-residue protein sequence, read N- to C-terminus: DNA repair protein RecO (255 aa).

This sequence belongs to the RecO family.

Functionally, involved in DNA repair and RecF pathway recombination. In Listeria monocytogenes serotype 4b (strain CLIP80459), this protein is DNA repair protein RecO.